Consider the following 441-residue polypeptide: Protein MONOCULM 1 (441 aa).

The segment at 1 to 33 (MLRSLHSSSSSDTDNNSGGCKNNGGGGGEAAAA) is disordered. Positions 7-20 (SSSSSDTDNNSGGC) are enriched in low complexity. Positions 21–33 (KNNGGGGGEAAAA) are enriched in gly residues. Residues 41 to 437 (RAVAAAAPST…RPLLSVSAWQ (397 aa)) enclose the GRAS domain. Residues 48–126 (PSTRDLLLAC…GAARPASSGA (79 aa)) form a leucine repeat I (LRI) region. Residues 127–195 (YLAFNQIAPF…LGPPEVRVTG (69 aa)) form a VHIID region. The VHIID signature appears at 158-162 (VHILD). The interval 205–256 (RTGNRLRAFARSIHLPFHFTPLLLSCATTAPHHVAGTSTGAAAAASTAAAAT) is leucine repeat II (LRII). The interval 266–361 (LAVNCVMFLH…QEVLGREIEA (96 aa)) is PFYRE. The segment at 364–437 (GPSGGRWWRG…RPLLSVSAWQ (74 aa)) is SAW.

It belongs to the GRAS family. In terms of tissue distribution, expressed in a small number of epidermal or subepidermal cells at the leaf axils, in axillary meristems and the entire tiller buds. Undetected in the shoot apical meristem.

Its subcellular location is the nucleus. Putative transcription regulator that controls rice tillering by initiating axillary buds and promoting their outgrowth. Rice tiller is a specialized grain-bearing branch that is formed on the unelongated basal internode and grows independently of the mother stem (culm) by means of its own adventitious roots. This chain is Protein MONOCULM 1, found in Oryza sativa subsp. japonica (Rice).